Here is a 372-residue protein sequence, read N- to C-terminus: 4-hydroxy-3-methylbut-2-en-1-yl diphosphate synthase (flavodoxin) (372 aa).

Residues Cys-270, Cys-273, Cys-305, and Glu-312 each coordinate [4Fe-4S] cluster.

Belongs to the IspG family. The cofactor is [4Fe-4S] cluster.

The enzyme catalyses (2E)-4-hydroxy-3-methylbut-2-enyl diphosphate + oxidized [flavodoxin] + H2O + 2 H(+) = 2-C-methyl-D-erythritol 2,4-cyclic diphosphate + reduced [flavodoxin]. It participates in isoprenoid biosynthesis; isopentenyl diphosphate biosynthesis via DXP pathway; isopentenyl diphosphate from 1-deoxy-D-xylulose 5-phosphate: step 5/6. Functionally, converts 2C-methyl-D-erythritol 2,4-cyclodiphosphate (ME-2,4cPP) into 1-hydroxy-2-methyl-2-(E)-butenyl 4-diphosphate. The sequence is that of 4-hydroxy-3-methylbut-2-en-1-yl diphosphate synthase (flavodoxin) from Salmonella arizonae (strain ATCC BAA-731 / CDC346-86 / RSK2980).